Here is a 121-residue protein sequence, read N- to C-terminus: uncharacterized protein (121 aa).

Positions 1–121 are disordered; sequence MGQVLSICSS…QQEREQIKWD (121 aa). The N-myristoyl glycine moiety is linked to residue Gly2. The S-palmitoyl cysteine moiety is linked to residue Cys8. Composition is skewed to basic and acidic residues over residues 11-23, 73-83, 90-105, and 112-121; these read KSKE…EKPT, AAEKRNIEKKK, RQLE…EHLQ, and QQEREQIKWD.

It to yeast YGL108C. In terms of processing, myristoylated. The N-myristoylated protein is further palmitoylated.

Its subcellular location is the cytoplasm. The protein resides in the cytosol. This is an uncharacterized protein from Schizosaccharomyces pombe (strain 972 / ATCC 24843) (Fission yeast).